The following is a 221-amino-acid chain: Potassium voltage-gated channel subfamily E member 4 (221 aa).

Topologically, residues M1 to E86 are extracellular. Residue N9 is glycosylated (N-linked (GlcNAc...) asparagine). Residues L58–L72 show a composition bias toward polar residues. The disordered stretch occupies residues L58–A77. The chain crosses the membrane as a helical span at residues Y87–G107. Residues Y108–S221 are Cytoplasmic-facing. The segment at S175–S221 is disordered. The segment covering E192–S202 has biased composition (acidic residues). Positions E203–S221 are enriched in polar residues.

The protein belongs to the potassium channel KCNE family. Forms heterooligomers with KCNA3, inhibiting its activity by impairing localization to the cell membrane. The stoichiometry of KCNA3 and KCNE4 in the heterooligomers are 4:1, 4:2, 4:3 or 4:4 respectively. Increasing the number of KCNE4 subunits steadily slows the activation KCNA3 and decreases its abundance at the cell membrane. However, a single subunit of KCNE4 is sufficient for the cooperative enhancement of the inactivating function of the channel. However, a single subunit of KCNE4 is sufficient for the cooperative enhancement of the inactivating function of the channel. Interacts with KCNQ1; impairs KCNQ1 localization in lipid rafts and inhibits voltage-gated potassium channel activity. Predominantly expressed in embryo and adult uterus. Low expression found in kidney, small intestine, lung and heart. In terms of tissue distribution, detected in kidney, thymus, and uterus (at protein level).

Its subcellular location is the membrane. Its function is as follows. Ancillary protein that functions as a regulatory subunit of the voltage-gated potassium (Kv) channel complex composed of pore-forming and potassium-conducting alpha subunits and of regulatory beta subunits. KCNE4 beta subunit modulates the gating kinetics and enhances stability of the channel complex. Associates with KCNQ1/KVLTQ1 alpha subunit to inhibit potassium currents. May inhibit KCNQ4-mediated potassium currents. This chain is Potassium voltage-gated channel subfamily E member 4, found in Homo sapiens (Human).